A 270-amino-acid polypeptide reads, in one-letter code: Urease accessory protein UreD (270 aa).

This sequence belongs to the UreD family. UreD, UreF and UreG form a complex that acts as a GTP-hydrolysis-dependent molecular chaperone, activating the urease apoprotein by helping to assemble the nickel containing metallocenter of UreC. The UreE protein probably delivers the nickel.

It localises to the cytoplasm. Its function is as follows. Required for maturation of urease via the functional incorporation of the urease nickel metallocenter. In Actinobacillus pleuropneumoniae serotype 7 (strain AP76), this protein is Urease accessory protein UreD.